The sequence spans 125 residues: Large ribosomal subunit protein bL12 (125 aa).

The protein belongs to the bacterial ribosomal protein bL12 family. In terms of assembly, homodimer. Part of the ribosomal stalk of the 50S ribosomal subunit. Forms a multimeric L10(L12)X complex, where L10 forms an elongated spine to which 2 to 4 L12 dimers bind in a sequential fashion. Binds GTP-bound translation factors.

Forms part of the ribosomal stalk which helps the ribosome interact with GTP-bound translation factors. Is thus essential for accurate translation. The protein is Large ribosomal subunit protein bL12 of Thermoanaerobacter sp. (strain X514).